The chain runs to 317 residues: Ubiquinone biosynthesis protein COQ9, mitochondrial (317 aa).

Residues 1 to 46 (MAASVARVLKAAGGRQLLLMVARRRPVLRQPFLLMPRKFWGTSALR) constitute a mitochondrion transit peptide. The interval 45–97 (LRSEDQKQPPFSSTSAHAGTPEHAEEQYQQQQPPPRYTDQAGEESEGYESEEQ) is disordered. Residues 85-96 (AGEESEGYESEE) are compositionally biased toward acidic residues. Residue arginine 243 coordinates a 1,2-diacylglycero-3-phosphoethanolamine.

It belongs to the COQ9 family. Homodimer. Heterodimer; two heterodimers of COQ7:COQ9 come together on the same side of the lipid pseudo-bilayer and form a curved tetramer with a hydrophobic surface suitable for membrane interaction. These two tetramers assemble into a soluble octamer with a pseudo-bilayer of lipids captured within. Interacts with COQ7; this interaction allows ubiquinone (CoQ) isoprene intermediates presentation to COQ7 and facilitates the COQ7-mediated hydroxylase step.

The protein localises to the mitochondrion. Its pathway is cofactor biosynthesis; ubiquinone biosynthesis. Its function is as follows. Membrane-associated protein that warps the membrane surface to access and bind aromatic isoprenes with high specificity, including ubiquinone (CoQ) isoprene intermediates and presents them directly to COQ7, therefore facilitating the COQ7-mediated hydroxylase step. Participates in the biosynthesis of coenzyme Q, also named ubiquinone, an essential lipid-soluble electron transporter for aerobic cellular respiration. This is Ubiquinone biosynthesis protein COQ9, mitochondrial from Xenopus tropicalis (Western clawed frog).